We begin with the raw amino-acid sequence, 411 residues long: Inhibin beta B chain (411 aa).

Positions 1 to 28 (MDGLPGRALGAACLLLLVAGWLGPEAWG) are cleaved as a signal peptide. Residues 28 to 69 (GSPTPPPSPAAPPPPPPPGAPGGSQDTCTSCGGGGGGFRRPE) form a disordered region. Residues 29–296 (SPTPPPSPAA…GDSRHRIRKR (268 aa)) constitute a propeptide that is removed on maturation. Residues 30 to 47 (PTPPPSPAAPPPPPPPGA) are compositionally biased toward pro residues. N-linked (GlcNAc...) asparagine glycosylation occurs at Asn97. Cystine bridges form between Cys300/Cys308, Cys307/Cys376, Cys336/Cys408, and Cys340/Cys410.

Belongs to the TGF-beta family. As to quaternary structure, dimeric, linked by one or more disulfide bonds. Inhibin B is a dimer of alpha and beta-B. Activin B is a homodimer of beta-B. Activin AB is a dimer of beta-A and beta-B. Interacts with FST and FSTL3. Activin B interacts with BMPR2. Uterus, testis, ovary, lung, kidney, brain, CJ7 embryonic stem cells, and possibly in liver.

Its subcellular location is the secreted. Inhibins and activins inhibit and activate, respectively, the secretion of follitropin by the pituitary gland. Inhibins/activins are involved in regulating a number of diverse functions such as hypothalamic and pituitary hormone secretion, gonadal hormone secretion, germ cell development and maturation, erythroid differentiation, insulin secretion, nerve cell survival, embryonic axial development or bone growth, depending on their subunit composition. Inhibins appear to oppose the functions of activins. Its function is as follows. Activin B is a dimer of alpha and beta-B that plays a role in several essential biological processes including embryonic development, stem cell maintenance and differentiation, haematopoiesis, cell proliferation and wound healing. Signals through type I receptor ACVR1C, abundantly expressed in pancreatic beta cells, and type II receptors like ACVR2A. Upon ligand binding, these receptors phosphorylate intracellular signaling mediators SMAD2 and SMAD3, which form a complex with SMAD4, translocate to the nucleus, and regulate gene expression. Plays a crucial role in the induction of hepcidin by inflammation through activation of ACVR1C and subsequent phosphorylation of SMAD1/5/8. Regulates adipocyte lipid metabolism by decreasing non-esterified fatty acids and glycerol release and increases intracellular triglyceride content. Stimulates wound healing by promoting cell migration and hair follicle regeneration through the JNK and ERK signaling pathways downstream of RHOA. In terms of biological role, inhibin B is a dimer of alpha and beta-B that plays a crucial role in the regulation of the reproductive system by inhibiting the secretion of follicle-stimulating hormone (FSH) from the anterior pituitary gland. Thereby, maintains reproductive homeostasis in both males and females. Acts as a more potent suppressor of FSH release than inhibin A. Functions as competitive receptor antagonist binding activin type II receptors with high affinity in the presence of the TGF-beta type III coreceptor/TGFBR3L. The protein is Inhibin beta B chain (Inhbb) of Mus musculus (Mouse).